A 723-amino-acid polypeptide reads, in one-letter code: Translation initiation factor IF-2 (723 aa).

Positions 112–138 (KIFNNKKNKKQKPQQAPQQEVQKKKEK) are disordered. Positions 114–123 (FNNKKNKKQK) are enriched in basic residues. The tr-type G domain occupies 224–393 (ERPPVVTIMG…LLVSEMEELK (170 aa)). Residues 233 to 240 (GHVDHGKT) form a G1 region. GTP is bound at residue 233-240 (GHVDHGKT). The interval 258-262 (GITQH) is G2. Positions 279 to 282 (DTPG) are G3. GTP is bound by residues 279-283 (DTPGH) and 333-336 (NKID). Residues 333–336 (NKID) are G4. A G5 region spans residues 369–371 (SAL).

Belongs to the TRAFAC class translation factor GTPase superfamily. Classic translation factor GTPase family. IF-2 subfamily.

Its subcellular location is the cytoplasm. Its function is as follows. One of the essential components for the initiation of protein synthesis. Protects formylmethionyl-tRNA from spontaneous hydrolysis and promotes its binding to the 30S ribosomal subunits. Also involved in the hydrolysis of GTP during the formation of the 70S ribosomal complex. This is Translation initiation factor IF-2 from Anoxybacillus flavithermus (strain DSM 21510 / WK1).